Consider the following 137-residue polypeptide: Profilin-3 (137 aa).

This sequence belongs to the profilin family. As to quaternary structure, interacts with ACTRT3. As to expression, detected in round spermatids.

The protein resides in the cytoplasm. It is found in the cytoskeleton. Its subcellular location is the nucleus. Functionally, binds to actin and affects the structure of the cytoskeleton. Slightly reduces actin polymerization. Binds to poly-L-proline, phosphatidylinositol 3-phosphate (PtdIns(3)P), phosphatidylinositol 4,5-bisphosphate (PtdIns(4,5)P2), and phosphatidylinositol 4-phosphate (PtdIns(4)P). May be involved in spermatogenesis. In Rattus norvegicus (Rat), this protein is Profilin-3 (Pfn3).